A 122-amino-acid chain; its full sequence is MSIRTGKVSSLLQKELSSIFEKELPRSGPLLTIVEVKVTADLGIARVYVSLIGSEKERGLLMEHLQNETKYIRKLLSSRIRHQFRRIPELEFYEDEQYDKARRIEELLKEALNRPGEEQTES.

Belongs to the RbfA family. As to quaternary structure, monomer. Binds 30S ribosomal subunits, but not 50S ribosomal subunits or 70S ribosomes.

The protein resides in the cytoplasm. One of several proteins that assist in the late maturation steps of the functional core of the 30S ribosomal subunit. Associates with free 30S ribosomal subunits (but not with 30S subunits that are part of 70S ribosomes or polysomes). Required for efficient processing of 16S rRNA. May interact with the 5'-terminal helix region of 16S rRNA. The sequence is that of Ribosome-binding factor A from Prosthecochloris aestuarii (strain DSM 271 / SK 413).